The sequence spans 721 residues: Polyribonucleotide nucleotidyltransferase (721 aa).

Mg(2+)-binding residues include Asp495 and Asp501. One can recognise a KH domain in the interval 562–621 (PRLLSFRIDPELIGTVIGPGGRTIKGITERTNTKIDIEDGGIVTIASHDGAAAEEAQKII). In terms of domain architecture, S1 motif spans 631 to 699 (GEIFPGVVTR…SRGRINLTLR (69 aa)). The interval 702 to 721 (GQNGGMSYPEPTPTPVAPLS) is disordered. Pro residues predominate over residues 711-721 (EPTPTPVAPLS).

This sequence belongs to the polyribonucleotide nucleotidyltransferase family. It depends on Mg(2+) as a cofactor.

It localises to the cytoplasm. The catalysed reaction is RNA(n+1) + phosphate = RNA(n) + a ribonucleoside 5'-diphosphate. Involved in mRNA degradation. Catalyzes the phosphorolysis of single-stranded polyribonucleotides processively in the 3'- to 5'-direction. The protein is Polyribonucleotide nucleotidyltransferase of Prochlorococcus marinus (strain MIT 9301).